A 556-amino-acid chain; its full sequence is Optineurin (556 aa).

Positions M1–S33 are disordered. The segment covering E11 to N22 has biased composition (basic and acidic residues). Residues E38 to A164 adopt a coiled-coil conformation. Residues D168 to I173 carry the LIR motif. A coiled-coil region spans residues V219 to D487. Residues E245 to I274 are disordered. Polar residues predominate over residues E253–N265. A UBAN motif is present at residues D453–R458. The interval M496–P524 is disordered. The segment at Q526 to N556 adopts a CCHC NOA-type zinc-finger fold. Zn(2+)-binding residues include C534, C537, H550, and C554.

In terms of assembly, binds to linear ubiquitin chains. Interacts with LC3 family members. In terms of tissue distribution, expressed in erythrocytes, skeletal muscle, heart, spleen and brain. Weakly expressed in lung and liver (at protein level).

The protein resides in the cytoplasm. It is found in the perinuclear region. The protein localises to the golgi apparatus. Its subcellular location is the trans-Golgi network. It localises to the cytoplasmic vesicle. The protein resides in the recycling endosome. It is found in the autophagosome. Functionally, probably part of the TNF-alpha signaling pathway that can shift the equilibrium toward induction of cell death. May act by regulating membrane trafficking and cellular morphogenesis. May act as autophagy receptor that interacts directly with both the cargo to become degraded and an autophagy modifier of the MAP1 LC3 family. The protein is Optineurin (OPTN) of Gallus gallus (Chicken).